The sequence spans 751 residues: Photosystem I P700 chlorophyll a apoprotein A1 (751 aa).

The next 8 helical transmembrane spans lie at 73-96, 159-182, 198-222, 294-312, 349-372, 388-414, 436-458, and 533-551; these read VFSA…FHGA, LYIT…FHYH, LNHH…HVSL, VAHH…GHMY, WHAQ…QHMY, LSLF…IFMV, AIIS…LYIH, and FLVH…LILL. Residues C575 and C584 each coordinate [4Fe-4S] cluster. A run of 2 helical transmembrane segments spans residues 591-612 and 665-687; these read HVFL…HFSW and LSAY…MFLF. H676 contributes to the chlorophyll a' binding site. Residues M684 and Y692 each contribute to the chlorophyll a site. W693 is a phylloquinone binding site. A helical transmembrane segment spans residues 725–745; it reads AVGVAHYLLGGIATTWSFFLA.

It belongs to the PsaA/PsaB family. As to quaternary structure, the PsaA/B heterodimer binds the P700 chlorophyll special pair and subsequent electron acceptors. PSI consists of a core antenna complex that captures photons, and an electron transfer chain that converts photonic excitation into a charge separation. The eukaryotic PSI reaction center is composed of at least 11 subunits. Requires P700 is a chlorophyll a/chlorophyll a' dimer, A0 is one or more chlorophyll a, A1 is one or both phylloquinones and FX is a shared 4Fe-4S iron-sulfur center. as cofactor.

It localises to the plastid. The protein resides in the chloroplast thylakoid membrane. It carries out the reaction reduced [plastocyanin] + hnu + oxidized [2Fe-2S]-[ferredoxin] = oxidized [plastocyanin] + reduced [2Fe-2S]-[ferredoxin]. Its function is as follows. PsaA and PsaB bind P700, the primary electron donor of photosystem I (PSI), as well as the electron acceptors A0, A1 and FX. PSI is a plastocyanin/cytochrome c6-ferredoxin oxidoreductase, converting photonic excitation into a charge separation, which transfers an electron from the donor P700 chlorophyll pair to the spectroscopically characterized acceptors A0, A1, FX, FA and FB in turn. Oxidized P700 is reduced on the lumenal side of the thylakoid membrane by plastocyanin or cytochrome c6. The protein is Photosystem I P700 chlorophyll a apoprotein A1 of Euglena gracilis.